Reading from the N-terminus, the 607-residue chain is UvrABC system protein C (607 aa).

Positions T19–I97 constitute a GIY-YIG domain. The region spanning E205–I240 is the UVR domain.

This sequence belongs to the UvrC family. As to quaternary structure, interacts with UvrB in an incision complex.

The protein resides in the cytoplasm. In terms of biological role, the UvrABC repair system catalyzes the recognition and processing of DNA lesions. UvrC both incises the 5' and 3' sides of the lesion. The N-terminal half is responsible for the 3' incision and the C-terminal half is responsible for the 5' incision. In Dichelobacter nodosus (strain VCS1703A), this protein is UvrABC system protein C.